Consider the following 227-residue polypeptide: Izumo sperm-egg fusion protein 4 (227 aa).

An N-terminal signal peptide occupies residues 1–24; the sequence is MFGQGRLGQAMALLLFLGMTAALA. Residues N153 and N214 are each glycosylated (N-linked (GlcNAc...) asparagine).

The protein belongs to the Izumo family.

The protein resides in the secreted. In Mus musculus (Mouse), this protein is Izumo sperm-egg fusion protein 4 (Izumo4).